Reading from the N-terminus, the 400-residue chain is Large envelope protein (400 aa).

Met1 is subject to N-acetylmethionine. Residue Gly2 is the site of N-myristoyl glycine; by host attachment. The tract at residues 2–119 is pre-S1; that stretch reads GAPLSTARRG…PPLRDTHPQA (118 aa). Residues 2–174 form a pre-S region; the sequence is GAPLSTARRG…FSKTGDPAMN (173 aa). At 2–181 the chain is on the virion surface; in external conformation side; it reads GAPLSTARRG…AMNMENITSG (180 aa). Topologically, residues 2–253 are intravirion; in internal conformation; sequence GAPLSTARRG…PGYRWMCLRR (252 aa). N-linked (GlcNAc...) asparagine glycosylation is present at Pro4. Residues 70 to 115 are disordered; sequence PHGGLLGWSPQAQGILTTSPPDPPPASTNRRSGRKPTPVSPPLRDT. Polar residues predominate over residues 79-88; that stretch reads PQAQGILTTS. The pre-S2 stretch occupies residues 120–174; that stretch reads MQWNSTQFHQALLDPRVRGLYFPAGGSSSETQNPAPTIASLTSSIFSKTGDPAMN. Residues 182 to 202 traverse the membrane as a helical segment; sequence LLRPLLVLQAVCFLLTKILTI. Residues 203–253 are Intravirion; in external conformation-facing; the sequence is PQSLDSWWTSLNFLGVPPGCPGQNSQSPISNHLPTSCPPTCPGYRWMCLRR. The helical transmembrane segment at 254–274 threads the bilayer; that stretch reads FIIFLFILLLCLIFLLVLLDY. Residues 275-348 lie on the Virion surface side of the membrane; the sequence is QGMLPVCPLL…WASARFSWLS (74 aa). N-linked (GlcNAc...) asparagine; by host glycosylation is present at Asn320. The helical transmembrane segment at 349 to 369 threads the bilayer; sequence LLVQFVQWCVGLSPTVWLLVI. Over 370–375 the chain is Intravirion; that stretch reads WMIWYW. The chain crosses the membrane as a helical span at residues 376–398; the sequence is GPNLCSILSPFIPLLPIFCYLWA. Residues 399–400 are Virion surface-facing; sequence SI.

This sequence belongs to the orthohepadnavirus major surface antigen family. In its internal form (Li-HBsAg), interacts with the capsid protein and with the isoform S. Interacts with host chaperone CANX. In terms of assembly, associates with host chaperone CANX through its pre-S2 N glycan; this association may be essential for isoform M proper secretion. As to quaternary structure, interacts with isoform L. Interacts with the antigens of satellite virus HDV (HDVAgs); this interaction is required for encapsidation of HDV genomic RNA. Isoform M is N-terminally acetylated by host at a ratio of 90%, and N-glycosylated by host at the pre-S2 region. In terms of processing, myristoylated.

The protein resides in the virion membrane. The large envelope protein exists in two topological conformations, one which is termed 'external' or Le-HBsAg and the other 'internal' or Li-HBsAg. In its external conformation the protein attaches the virus to cell receptors and thereby initiating infection. This interaction determines the species specificity and liver tropism. This attachment induces virion internalization predominantly through caveolin-mediated endocytosis. The large envelope protein also assures fusion between virion membrane and endosomal membrane. In its internal conformation the protein plays a role in virion morphogenesis and mediates the contact with the nucleocapsid like a matrix protein. Its function is as follows. The middle envelope protein plays an important role in the budding of the virion. It is involved in the induction of budding in a nucleocapsid independent way. In this process the majority of envelope proteins bud to form subviral lipoprotein particles of 22 nm of diameter that do not contain a nucleocapsid. This is Large envelope protein from Hepatitis B virus genotype H (isolate United States/LAS2523/2002) (HBV-H).